The following is a 396-amino-acid chain: Ribosomal RNA large subunit methyltransferase I (396 aa).

The PUA domain occupies 2–81; sequence TVSIYLAKGR…EAIDKDFFVR (80 aa).

Belongs to the methyltransferase superfamily. RlmI family.

The protein resides in the cytoplasm. It catalyses the reaction cytidine(1962) in 23S rRNA + S-adenosyl-L-methionine = 5-methylcytidine(1962) in 23S rRNA + S-adenosyl-L-homocysteine + H(+). Its function is as follows. Specifically methylates the cytosine at position 1962 (m5C1962) of 23S rRNA. The sequence is that of Ribosomal RNA large subunit methyltransferase I from Aliivibrio fischeri (strain ATCC 700601 / ES114) (Vibrio fischeri).